The primary structure comprises 335 residues: DNA-directed RNA polymerase subunit alpha (335 aa).

The segment at 1-233 is alpha N-terminal domain (alpha-NTD); that stretch reads MVREKITVST…DLFIPFLHME (233 aa). Residues 265–335 are alpha C-terminal domain (alpha-CTD); that stretch reads KEIALKSIFI…KQLVIFLPKK (71 aa).

It belongs to the RNA polymerase alpha chain family. In terms of assembly, in plastids the minimal PEP RNA polymerase catalytic core is composed of four subunits: alpha, beta, beta', and beta''. When a (nuclear-encoded) sigma factor is associated with the core the holoenzyme is formed, which can initiate transcription.

The protein localises to the plastid. The protein resides in the chloroplast. The catalysed reaction is RNA(n) + a ribonucleoside 5'-triphosphate = RNA(n+1) + diphosphate. In terms of biological role, DNA-dependent RNA polymerase catalyzes the transcription of DNA into RNA using the four ribonucleoside triphosphates as substrates. In Coffea arabica (Arabian coffee), this protein is DNA-directed RNA polymerase subunit alpha.